The sequence spans 162 residues: Interleukin-15 (162 aa).

The first 29 residues, 1–29 (MKILKPYMRNTSISCYLCFLLNSHFLTEA), serve as a signal peptide directing secretion. Residues 30-48 (GIHVFILGCVSVGLPKTEA) constitute a propeptide that is removed on maturation. 2 cysteine pairs are disulfide-bonded: Cys83–Cys133 and Cys90–Cys136. N-linked (GlcNAc...) asparagine glycans are attached at residues Asn104, Asn108, and Asn119.

Belongs to the IL-15/IL-21 family.

It is found in the secreted. Its function is as follows. Cytokine that plays a major role in the development of inflammatory and protective immune responses to microbial invaders and parasites by modulating immune cells of both the innate and adaptive immune systems. Stimulates the proliferation and activation of natural killer cells, T-cells and B-cells and promotes the secretion of several cytokines. In monocytes, induces the production of IL8 and monocyte chemotactic protein 1/CCL2, two chemokines that attract neutrophils and monocytes respectively to sites of infection. Unlike most cytokines, which are secreted in soluble form, IL15 is expressed in association with its high affinity IL15RA on the surface of IL15-producing cells and delivers signals to target cells that express IL2RB and IL2RG receptor subunits. Binding to its receptor triggers the phosphorylation of JAK1 and JAK3 and the recruitment and subsequent phosphorylation of signal transducer and activator of transcription-3/STAT3 and STAT5. In mast cells, induces the rapid tyrosine phosphorylation of STAT6 and thereby controls mast cell survival and release of cytokines such as IL4. This is Interleukin-15 (Il15) from Mus musculus (Mouse).